The primary structure comprises 156 residues: Small ribosomal subunit protein uS7 (156 aa).

Belongs to the universal ribosomal protein uS7 family. In terms of assembly, part of the 30S ribosomal subunit. Contacts proteins S9 and S11.

In terms of biological role, one of the primary rRNA binding proteins, it binds directly to 16S rRNA where it nucleates assembly of the head domain of the 30S subunit. Is located at the subunit interface close to the decoding center, probably blocks exit of the E-site tRNA. This Pelotomaculum thermopropionicum (strain DSM 13744 / JCM 10971 / SI) protein is Small ribosomal subunit protein uS7.